Reading from the N-terminus, the 626-residue chain is Putative L-type lectin-domain containing receptor kinase V.8 (626 aa).

The N-terminal stretch at 1–21 (MPSELKVLHIVLVLLYTLSSS) is a signal peptide. Residues 22 to 212 (TYNSNGNWTL…SIGAFHYMLS (191 aa)) form a legume-lectin like region. Residues 22–245 (TYNSNGNWTL…PKKSSDRTKK (224 aa)) lie on the Extracellular side of the membrane. 4 N-linked (GlcNAc...) asparagine glycosylation sites follow: Asn-28, Asn-59, Asn-112, and Asn-162. The helical transmembrane segment at 246-266 (ILAVCLTLAVFAVFVASGICF) threads the bilayer. Residues 267-626 (VFYTRHKKVK…LTNSFLSHGR (360 aa)) are Cytoplasmic-facing. The region spanning 303–562 (FKEKQLLGKG…GLLCAHHTEL (260 aa)) is the Protein kinase domain. Residues 309–317 (LGKGGFGQV) and Lys-332 each bind ATP. Residue Asp-429 is the Proton acceptor of the active site.

This sequence in the C-terminal section; belongs to the protein kinase superfamily. Ser/Thr protein kinase family. It in the N-terminal section; belongs to the leguminous lectin family.

The protein resides in the cell membrane. The enzyme catalyses L-seryl-[protein] + ATP = O-phospho-L-seryl-[protein] + ADP + H(+). It catalyses the reaction L-threonyl-[protein] + ATP = O-phospho-L-threonyl-[protein] + ADP + H(+). This Arabidopsis thaliana (Mouse-ear cress) protein is Putative L-type lectin-domain containing receptor kinase V.8 (LECRK58).